The following is a 541-amino-acid chain: ATP synthase subunit alpha (541 aa).

169–176 (GDRQTGKT) is a binding site for ATP. Positions 506 to 541 (NTLLNVEEGDTGEEENNEGHNKAEQDTEEKDTEEVV) are disordered. Composition is skewed to acidic residues over residues 512–521 (EEGDTGEEEN) and 531–541 (DTEEKDTEEVV).

It belongs to the ATPase alpha/beta chains family. F-type ATPases have 2 components, CF(1) - the catalytic core - and CF(0) - the membrane proton channel. CF(1) has five subunits: alpha(3), beta(3), gamma(1), delta(1), epsilon(1). CF(0) has three main subunits: a(1), b(2) and c(9-12). The alpha and beta chains form an alternating ring which encloses part of the gamma chain. CF(1) is attached to CF(0) by a central stalk formed by the gamma and epsilon chains, while a peripheral stalk is formed by the delta and b chains.

It localises to the cell inner membrane. It catalyses the reaction ATP + H2O + 4 H(+)(in) = ADP + phosphate + 5 H(+)(out). Its function is as follows. Produces ATP from ADP in the presence of a proton gradient across the membrane. The alpha chain is a regulatory subunit. This Halothermothrix orenii (strain H 168 / OCM 544 / DSM 9562) protein is ATP synthase subunit alpha.